An 807-amino-acid chain; its full sequence is Serine/threonine-protein kinase AfsK (807 aa).

The region spanning 16–272 (FEVLGRLGAG…QAQLAPHLFA (257 aa)) is the Protein kinase domain. ATP is bound by residues 22–30 (LGAGGMGLV) and lysine 44. Phosphoserine; by autocatalysis is present on serine 71. Residue aspartate 138 is the Proton acceptor of the active site. At threonine 168 the chain carries Phosphothreonine; by autocatalysis. Disordered stretches follow at residues 292-328 (MIERRRGGRRTARRPPRPRPRRLRAAPQGPGAGHRLA) and 353-429 (AGPS…PSPA). The segment covering 297–315 (RGGRRTARRPPRPRPRRLR) has biased composition (basic residues). Residues 353–363 (AGPSAAPDGGP) show a composition bias toward low complexity.

Belongs to the protein kinase superfamily. Ser/Thr protein kinase family. As to quaternary structure, interacts (via the N-terminal kinase domain) with KbpA; the interaction prevents autophosphorylation of AfsK. Post-translationally, autophosphorylated mainly on threonine residues. Some phosphorylation on serine residues. Autophosphorylation on Thr-168 is the major site enhancing kinase activity towards AfsR, and is regulated though interaction with KbpA.

The catalysed reaction is L-seryl-[protein] + ATP = O-phospho-L-seryl-[protein] + ADP + H(+). It carries out the reaction L-threonyl-[protein] + ATP = O-phospho-L-threonyl-[protein] + ADP + H(+). In terms of biological role, component of the AfsK/AfsR system involved in the response of aerial mycelium formation to glucose. This is Serine/threonine-protein kinase AfsK (afsK) from Streptomyces griseus.